The following is a 76-amino-acid chain: Putative membrane protein insertion efficiency factor (76 aa).

The protein belongs to the UPF0161 family.

Its subcellular location is the cell inner membrane. Its function is as follows. Could be involved in insertion of integral membrane proteins into the membrane. This Paraburkholderia phymatum (strain DSM 17167 / CIP 108236 / LMG 21445 / STM815) (Burkholderia phymatum) protein is Putative membrane protein insertion efficiency factor.